We begin with the raw amino-acid sequence, 878 residues long: Alanine--tRNA ligase (878 aa).

Residues histidine 567, histidine 571, cysteine 669, and histidine 673 each coordinate Zn(2+).

Belongs to the class-II aminoacyl-tRNA synthetase family. The cofactor is Zn(2+).

Its subcellular location is the cytoplasm. The enzyme catalyses tRNA(Ala) + L-alanine + ATP = L-alanyl-tRNA(Ala) + AMP + diphosphate. In terms of biological role, catalyzes the attachment of alanine to tRNA(Ala) in a two-step reaction: alanine is first activated by ATP to form Ala-AMP and then transferred to the acceptor end of tRNA(Ala). Also edits incorrectly charged Ser-tRNA(Ala) and Gly-tRNA(Ala) via its editing domain. The sequence is that of Alanine--tRNA ligase from Rickettsia conorii (strain ATCC VR-613 / Malish 7).